The primary structure comprises 343 residues: Sodium/bile acid cotransporter 7-B (343 aa).

The Cytoplasmic segment spans residues 1-9; it reads MGLLERLRK. A helical membrane pass occupies residues 10 to 30; sequence EWFIIGIILVIVAAKLEPTIG. At 31-37 the chain is on the extracellular side; sequence EKGGPLK. A helical transmembrane segment spans residues 38–58; the sequence is PEITITYIAVSAIFFNSGLSL. Residues 59–71 are Cytoplasmic-facing; sequence KTEELTNALMHVK. Residues 72–92 traverse the membrane as a helical segment; the sequence is LHLFVQLFTLVFFPTAIWIFL. Over 93–116 the chain is Extracellular; it reads QVLSLTPINEWLLKGLQTVSCMPP. A helical transmembrane segment spans residues 117–137; that stretch reads PVSSAVILTKAVGGNEAAAIF. Asn138 is a topological domain (cytoplasmic). Residues 139-159 form a helical membrane-spanning segment; the sequence is SAFGSFLGIVVTPLLLLLFLG. Residues 160–163 are Extracellular-facing; it reads SSSS. The chain crosses the membrane as a helical span at residues 164–184; the sequence is VPFTSIFSQLFMTVVVPLIIG. Residues 185–201 are Cytoplasmic-facing; the sequence is QIVRRYIKDWLERKKPP. The chain crosses the membrane as a helical span at residues 202–222; it reads FGAISSCVLLMIIYTTFCDTF. The Extracellular segment spans residues 223–234; the sequence is SNPNIDLDTFSL. A helical membrane pass occupies residues 235–255; that stretch reads VVIVFIIFFIQLAFMLLTFLF. At 256–270 the chain is on the cytoplasmic side; sequence STSKNSGFTPADTVA. A helical membrane pass occupies residues 271 to 291; sequence IVFCSTHKSLTLGIPMLKIVF. Residues 292–298 are Extracellular-facing; the sequence is AGYEHLS. The chain crosses the membrane as a helical span at residues 299 to 319; the sequence is LISVPLLIYHPAQILLGSVLV. Residues 320–343 are Cytoplasmic-facing; that stretch reads PTIKSWMLSRRKALKLTRQPKIPL.

The protein belongs to the bile acid:sodium symporter (BASS) (TC 2.A.28) family.

The protein resides in the cell membrane. It localises to the endoplasmic reticulum membrane. The protein localises to the golgi apparatus membrane. Functionally, involved in teeth and skeletal development. Has an essential role in the biosynthesis and trafficking of glycosaminoglycans and glycoproteins to produce a proper functioning extracellular matrix. Required for extracellular matrix mineralization. Also involved in the regulation of cellular calcium homeostasis. Does not show transport activity towards bile acids or steroid sulfates. In Xenopus laevis (African clawed frog), this protein is Sodium/bile acid cotransporter 7-B (slc10a7-b).